The chain runs to 183 residues: Ras-related protein Rap-2c (183 aa).

10–17 provides a ligand contact to GTP; sequence GSGGVGKS. The Effector region motif lies at 32 to 40; the sequence is YDPTIEDFY. GTP-binding positions include 57–61 and 116–119; these read DTAGT and NKVD. S-palmitoyl cysteine attachment occurs at residues cysteine 176 and cysteine 177. Cysteine 180 bears the Cysteine methyl ester mark. Cysteine 180 carries S-geranylgeranyl cysteine lipidation. Residues 181 to 183 constitute a propeptide, removed in mature form; sequence VVQ.

Belongs to the small GTPase superfamily. Ras family. Post-translationally, palmitoylated. Palmitoylation is required for association with recycling endosome membranes and activation of TNIK.

It is found in the cytoplasm. It localises to the recycling endosome membrane. It carries out the reaction GTP + H2O = GDP + phosphate + H(+). Its function is as follows. Small GTP-binding protein which cycles between a GDP-bound inactive and a GTP-bound active form. May play a role in cytoskeletal rearrangements and regulate cell spreading through activation of the effector TNIK. May play a role in SRE-mediated gene transcription. The chain is Ras-related protein Rap-2c (RAP2C) from Bos taurus (Bovine).